The primary structure comprises 20 residues: FLAKKVAKKLVSHVAQKQME.

A Glutamic acid 1-amide modification is found at glutamate 20.

In terms of tissue distribution, expressed by the venom gland.

Its subcellular location is the secreted. In Cupiennius salei (American wandering spider), this protein is Short cationic peptide-4c.